Here is a 232-residue protein sequence, read N- to C-terminus: Small ribosomal subunit protein uS2 (232 aa).

It belongs to the universal ribosomal protein uS2 family.

The protein is Small ribosomal subunit protein uS2 of Syntrophomonas wolfei subsp. wolfei (strain DSM 2245B / Goettingen).